The primary structure comprises 307 residues: Pseudouridine-5'-phosphate glycosidase (307 aa).

Glutamate 25 functions as the Proton donor in the catalytic mechanism. Substrate contacts are provided by lysine 86 and valine 106. Aspartate 138 is a Mn(2+) binding site. 140–142 serves as a coordination point for substrate; that stretch reads SAD. Lysine 159 (nucleophile) is an active-site residue.

It belongs to the pseudouridine-5'-phosphate glycosidase family. Homotrimer. Mn(2+) is required as a cofactor.

It carries out the reaction D-ribose 5-phosphate + uracil = psi-UMP + H2O. Functionally, catalyzes the reversible cleavage of pseudouridine 5'-phosphate (PsiMP) to ribose 5-phosphate and uracil. Functions biologically in the cleavage direction, as part of a pseudouridine degradation pathway. In Caldanaerobacter subterraneus subsp. tengcongensis (strain DSM 15242 / JCM 11007 / NBRC 100824 / MB4) (Thermoanaerobacter tengcongensis), this protein is Pseudouridine-5'-phosphate glycosidase.